The primary structure comprises 1023 residues: MNQMNQPPNKCQTYLNLGSPLSAISSSPDSTKLIVAGRDIVKIVSVQNNEFKVTSNLRAGKTQSLNYTGNDCCWHPSLLENYRFLIATAATNGAVVIWNTVREGSKSVERVFTDHSRAVNKLAWHPEKLDCILTGSQDNTLRMWDIRDSANASKITFSPKSESIRDVQFNPSQANQFAAAFDNGTIQLWDIRKPTIAVEKITSHQGLVLTIDWHPEEKNIIASGGRDRAIRVWDFSNGKSLNNVSTISSVSRIKWRPGNKWHIASCSSIVDFQIHIWDVKKPYIPLFSFTDHRDVPTGLIWKSPSSLISCSKDSHLLLNEFQDSYKPYQHIRTTGITWNVNNELASINDKINRTQSNESLPSLSTQFPSFFASFNVPTPPPLPPLVKVEQGIMNIYTPKYQNSEIVYDEKYLFEHFAKNYRFRGESFNQLCDHNQFVSQSVNQHHISTMWSLLKLHYSNLDEIQQHKELIEQQQKEELEKLNNKKIEKQQPQKLKKQQQQQQQQQQQQQQQSQQQLQQPQLQQPQQQQQLQQPQQQLRQQNDKNIKEQQIQYIENLENKQLDSKNIIDNSNDSNQEININKEDKEDEEEDDDNTSNNLDDNQMGDIFDPSNDMMTAKEPPSSSLMEFNANDTGNDQFCNILSAEAVTPLVSLPTSISLERQKSTDNISDNNSNVHVNIKRQNQPTNNNNNNSNIDNLEKKSNKSKSTKENKESSLTDQNKQKRNDNKEKIDNNEIDNDNKDNNDDDDNDVDNIGEDNDEINNNNDNNNNNNNNNNNNNNNNNNNNNNNNNNNNNNNNKNNNNDNNNNNNINNKKNKIKNKSIENKKDILDKKEINDEDNKSNDENDSLKILIPCFEFEEFNFQPIITDMLEACIEKGDVQTCVFIVLILGRYMDLNIEKHRLTTWFGSYIELLQRYKMWSLALEVMKYCDDQIINQASKRHTTLISACSSCGKSIPQNSIICEKCNKASSKCSICRLPVKGMWVWCQGCGHGGHLEHMKSWFIDKNQKSCPTGCTHICTPFKK.

WD repeat units follow at residues 16-54 (NLGSPLSAISSSPDSTKLIVAGRDIVKIVSVQNNEFKVT), 64-108 (SLNY…SKSV), 114-154 (DHSR…NASK), 159-199 (PKSE…IAVE), 203-243 (SHQG…SLNN), 245-287 (STIS…IPLF), and 291-329 (DHRDVPTGLIWKSPSSLISCSKDSHLLLNEFQDSYKPYQ). Positions 563–578 (SKNIIDNSNDSNQEIN) are enriched in low complexity. Disordered regions lie at residues 563 to 621 (SKNI…EPPS) and 661 to 824 (QKST…SIEN). A compositionally biased stretch (acidic residues) spans 584-593 (KEDEEEDDDN). Positions 661-681 (QKSTDNISDNNSNVHVNIKRQ) are enriched in polar residues. Residues 682–695 (NQPTNNNNNNSNID) are compositionally biased toward low complexity. Residues 696-742 (NLEKKSNKSKSTKENKESSLTDQNKQKRNDNKEKIDNNEIDNDNKDN) show a composition bias toward basic and acidic residues. Residues 743-759 (NDDDDNDVDNIGEDNDE) are compositionally biased toward acidic residues. Low complexity predominate over residues 760 to 812 (INNNNDNNNNNNNNNNNNNNNNNNNNNNNNNNNNNNNNKNNNNDNNNNNNINN). The C4-type zinc finger occupies 947–969 (ACSSCGKSIPQNSIICEKCNKAS). Residues Cys-948, Cys-951, Cys-962, Cys-965, Cys-972, Cys-975, Cys-986, Cys-989, His-991, His-994, His-997, Cys-1010, Cys-1014, His-1016, and Cys-1018 each contribute to the Zn(2+) site. The RING-type; atypical zinc finger occupies 970-1021 (SKCSICRLPVKGMWVWCQGCGHGGHLEHMKSWFIDKNQKSCPTGCTHICTPF).

Belongs to the WD repeat WDR24 family. In terms of assembly, probably part of the GATOR complex.

It is found in the lysosome membrane. It catalyses the reaction S-ubiquitinyl-[E2 ubiquitin-conjugating enzyme]-L-cysteine + [acceptor protein]-L-lysine = [E2 ubiquitin-conjugating enzyme]-L-cysteine + N(6)-ubiquitinyl-[acceptor protein]-L-lysine.. Its pathway is protein modification; protein ubiquitination. In terms of biological role, as a component of the GATOR complex may function in the amino acid-sensing branch of the TORC1 signaling pathway. In Dictyostelium discoideum (Social amoeba), this protein is GATOR2 complex protein WDR24.